The sequence spans 289 residues: Acetyl-coenzyme A carboxylase carboxyl transferase subunit beta (289 aa).

A CoA carboxyltransferase N-terminal domain is found at 28 to 289; that stretch reads VMTKCPECKK…QGGEMAVWQS (262 aa). Residues cysteine 32, cysteine 35, cysteine 51, and cysteine 54 each contribute to the Zn(2+) site. The segment at 32–54 adopts a C4-type zinc-finger fold; it reads CPECKKIMYTKELLKNLKVCVNC.

It belongs to the AccD/PCCB family. As to quaternary structure, acetyl-CoA carboxylase is a heterohexamer composed of biotin carboxyl carrier protein (AccB), biotin carboxylase (AccC) and two subunits each of ACCase subunit alpha (AccA) and ACCase subunit beta (AccD). It depends on Zn(2+) as a cofactor.

It localises to the cytoplasm. It carries out the reaction N(6)-carboxybiotinyl-L-lysyl-[protein] + acetyl-CoA = N(6)-biotinyl-L-lysyl-[protein] + malonyl-CoA. The protein operates within lipid metabolism; malonyl-CoA biosynthesis; malonyl-CoA from acetyl-CoA: step 1/1. In terms of biological role, component of the acetyl coenzyme A carboxylase (ACC) complex. Biotin carboxylase (BC) catalyzes the carboxylation of biotin on its carrier protein (BCCP) and then the CO(2) group is transferred by the transcarboxylase to acetyl-CoA to form malonyl-CoA. This Bacillus cereus (strain ATCC 14579 / DSM 31 / CCUG 7414 / JCM 2152 / NBRC 15305 / NCIMB 9373 / NCTC 2599 / NRRL B-3711) protein is Acetyl-coenzyme A carboxylase carboxyl transferase subunit beta.